A 4423-amino-acid chain; its full sequence is Nonribosomal peptide synthetase 7 (4423 aa).

A condensation 1 region spans residues 572–986 (NIYPCTSIQE…LISQDDKNRI (415 aa)). The tract at residues 1007 to 1404 (ERIQKQPSAV…GRRDTQVKIR (398 aa)) is adenylation 1. The 77-residue stretch at 1533–1609 (LPLTETEQKL…DLARTIDERN (77 aa)) folds into the Carrier 1 domain. Ser1570 is subject to O-(pantetheine 4'-phosphoryl)serine. The segment at 1657–2066 (EDVYPCTSLQ…QFLDETHHET (410 aa)) is condensation 2. Positions 2102–2499 (RDVAKEQPDS…YIGRMGSEVK (398 aa)) are adenylation 2. One can recognise a Carrier 2 domain in the interval 2642 to 2718 (VPQTRIGKKL…DCARILEADQ (77 aa)). The residue at position 2679 (Ser2679) is an O-(pantetheine 4'-phosphoryl)serine. Residues 2764 to 3170 (EDVYPCTPMQ…AASASSDDQT (407 aa)) form a condensation 3 region. An adenylation 3 region spans residues 3205-3609 (RSLETRPDSQ…GRGDSQIKIR (405 aa)). Positions 3731 to 3804 (TESEYITRTL…KMAVVAQHQT (74 aa)) constitute a Carrier 3 domain. The residue at position 3765 (Ser3765) is an O-(pantetheine 4'-phosphoryl)serine. The condensation 4 stretch occupies residues 3875 to 4278 (TFVLDAEGDL…SQDEKLALLG (404 aa)). The segment covering 4288–4300 (KLTKLQRVNSPKE) has biased composition (polar residues). The disordered stretch occupies residues 4288-4312 (KLTKLQRVNSPKEQTLRKDKPTNGV).

Belongs to the NRP synthetase family.

Its pathway is secondary metabolite biosynthesis. Functionally, nonribosomal peptide synthetase; part of the gene cluster that mediates the biosynthesis of the lipopeptide fusaristatin A. Fusaristatin A consists of a polyketide chain linked to three amino acid residues glutamine (Gln), dehydroalanine (dehydro-Ala), and beta-aminoisobutyric acid. The biosynthesis starts with formation of a linear polyketide chain by the highly reducing polyketide synthase PKS6. The gene cluster does not contain an acyl-CoA ligase or an acyl-transferase, and it is therefore predicted that the polyketide is transferred directly to the nonribosomal peptide synthetase NRPS7. Modules 1-3 from NRPS7 incorporate dehydro-Ala, Gln, and beta-aminoisobutyric acid in the compound, which is released by cyclization. The beta-aminoisobutyric acid units are most likely not freely available to the NRPS, but can be synthesized from thymine, which requires a dehydrogenase, a monooxygenase, and an aminotransferase. The fusaristatin A cluster contains a cytochrome P450 monooxygenase (FGSG_08207) and an aminotransferase (FGSG_17085), which theoretically can perform two of the enzymatic steps. The enzymes may however also be involved in biosynthesis of dehydroalanine or modification of the polyketide. The dehydro-Ala residue can be a result of cyclization, where serine is dehydrated. The last gene of the cluster encodes a protein with an A/B barrel domain found in variable enzymes, which hampers functional prediction. In Gibberella zeae (strain ATCC MYA-4620 / CBS 123657 / FGSC 9075 / NRRL 31084 / PH-1) (Wheat head blight fungus), this protein is Nonribosomal peptide synthetase 7.